The sequence spans 226 residues: UPF0758 protein Spy49_0870 (226 aa).

Residues 103 to 225 form the MPN domain; sequence SVLTSVQVAE…YYSFREKSTL (123 aa). H174, H176, and D187 together coordinate Zn(2+). The JAMM motif motif lies at 174 to 187; the sequence is HNHPSGNIEPSSND.

This sequence belongs to the UPF0758 family.

This is UPF0758 protein Spy49_0870 from Streptococcus pyogenes serotype M49 (strain NZ131).